The primary structure comprises 187 residues: MVNEFDKLKAGKLLLASANMLESSFKRTVLVVCEHNERGSLAFILNRPMEFKVCEAVSGFEEVEERLHMGGPVEVDTVHFLHSRGDLIDGSLEILPGIFWGGDKNELSYLLNTGVMMPSEIRFFLGYAGWSAGQLEAEFEEGAWYTAEASKDIIFSDAYERMWGRTVRSKGGEYQIVANSPELPGLN.

This sequence belongs to the UPF0301 (AlgH) family.

The sequence is that of UPF0301 protein Ppha_2142 from Pelodictyon phaeoclathratiforme (strain DSM 5477 / BU-1).